The chain runs to 103 residues: Pseudonajatoxin b homolog (103 aa).

Positions 1 to 21 (MKTLLLTLVVVTIVCLDLGYT) are cleaved as a signal peptide. 5 disulfides stabilise this stretch: Cys24–Cys42, Cys35–Cys63, Cys48–Cys52, Cys67–Cys79, and Cys80–Cys85.

This sequence belongs to the three-finger toxin family. Long-chain subfamily. Type II alpha-neurotoxin sub-subfamily. Expressed by the venom gland.

Its subcellular location is the secreted. Binds with high affinity to muscular (alpha-1/CHRNA1) and neuronal (alpha-7/CHRNA7) nicotinic acetylcholine receptor (nAChR) and inhibits acetylcholine from binding to the receptor, thereby impairing neuromuscular and neuronal transmission. This is Pseudonajatoxin b homolog from Pseudonaja textilis (Eastern brown snake).